A 47-amino-acid chain; its full sequence is Delta-actitoxin-Ael1a (47 aa).

3 disulfides stabilise this stretch: C4–C44, C6–C34, and C27–C45.

Belongs to the sea anemone sodium channel inhibitory toxin family. Type I subfamily. In terms of tissue distribution, expressed in ectodermal glands. Not expressed in nematocytes.

The protein resides in the secreted. Its function is as follows. Binds specifically to voltage-gated sodium channels (Nav), thereby delaying their inactivation during signal transduction. It strongly stimulates mammalian cardiac muscle contraction. Paralyzes the shore crab (C.maenas) by tetanic contractions after intramuscular injection. This Anthopleura elegantissima (Green aggregating anemone) protein is Delta-actitoxin-Ael1a.